A 123-amino-acid polypeptide reads, in one-letter code: Small ribosomal subunit protein uS12 (123 aa).

Asp89 is subject to 3-methylthioaspartic acid. The tract at residues 101 to 123 (TLDTSGVSDRRQSRSKYGAKRPK) is disordered. Basic residues predominate over residues 113–123 (SRSKYGAKRPK).

This sequence belongs to the universal ribosomal protein uS12 family. As to quaternary structure, part of the 30S ribosomal subunit. Contacts proteins S8 and S17. May interact with IF1 in the 30S initiation complex.

In terms of biological role, with S4 and S5 plays an important role in translational accuracy. Its function is as follows. Interacts with and stabilizes bases of the 16S rRNA that are involved in tRNA selection in the A site and with the mRNA backbone. Located at the interface of the 30S and 50S subunits, it traverses the body of the 30S subunit contacting proteins on the other side and probably holding the rRNA structure together. The combined cluster of proteins S8, S12 and S17 appears to hold together the shoulder and platform of the 30S subunit. The sequence is that of Small ribosomal subunit protein uS12 from Solidesulfovibrio magneticus (strain ATCC 700980 / DSM 13731 / RS-1) (Desulfovibrio magneticus).